Here is a 359-residue protein sequence, read N- to C-terminus: Type-1 angiotensin II receptor (359 aa).

Topologically, residues 1-25 (MILNSSTEDGIKRIQDDCPKAGRHN) are extracellular. Asn-4 carries an N-linked (GlcNAc...) asparagine glycan. Residues Gln-15 and Asp-17 each contribute to the angiotensin II site. 2 disulfide bridges follow: Cys-18–Cys-274 and Cys-101–Cys-180. Residues 26 to 55 (YIFIMIPTLYSIIFVVGIFGNSLVVIVIYF) form a helical membrane-spanning segment. Over 56 to 61 (YMKLKT) the chain is Cytoplasmic. A helical transmembrane segment spans residues 62 to 89 (VASVFLLNLALADLCFLLTLPLWAVYTA). The Extracellular segment spans residues 90 to 98 (MEYRWPFGN). The helical transmembrane segment at 99–125 (YLCKIASASVSFNLYASVFLLTCLSID) threads the bilayer. Residues 126–141 (RYLAIVHPMKSRLRRT) lie on the Cytoplasmic side of the membrane. A helical transmembrane segment spans residues 142-165 (MLVAKVTCIIIWLLAGLASLPTII). At 166-190 (HRNVFFIENTNITVCAFHYESQNST) the chain is on the extracellular side. Arg-167 serves as a coordination point for angiotensin II. The N-linked (GlcNAc...) asparagine glycan is linked to Asn-176. Positions 182, 183, and 184 each coordinate angiotensin II. Asn-188 carries N-linked (GlcNAc...) asparagine glycosylation. Residues 191 to 216 (LPVGLGLTKNILGFLFPFLIILTSYT) form a helical membrane-spanning segment. Lys-199 provides a ligand contact to angiotensin II. The Cytoplasmic segment spans residues 217 to 239 (LIWKTLKKAYEIQKNKPRKDDIF). The helical transmembrane segment at 240-268 (KIILAIVLFFFFSWVPHQIFTFMDVLIQL) threads the bilayer. Residues 269–278 (GLIRDCKIED) are Extracellular-facing. A helical transmembrane segment spans residues 279-304 (IVDTAMPITICLAYFNNCLNPLFYGF). Over 305 to 359 (LGKKFKKYFLQLLKYIPPKAKSHSNLSTKMSTLSYRPSENGNSSTKKPAPCIEVE) the chain is Cytoplasmic. The span at 336–350 (TLSYRPSENGNSSTK) shows a compositional bias: polar residues. The segment at 336–359 (TLSYRPSENGNSSTKKPAPCIEVE) is disordered. Cys-355 carries the S-palmitoyl cysteine lipid modification.

The protein belongs to the G-protein coupled receptor 1 family. As to quaternary structure, interacts with MAS1. Interacts with ARRB1. Interacts with FLNA (via filamin repeat 21); increases PKA-mediated phosphorylation of FLNA. In terms of processing, C-terminal Ser or Thr residues may be phosphorylated. As to expression, adrenal medulla, cortex and kidney.

The protein localises to the cell membrane. Its function is as follows. Receptor for angiotensin II, a vasoconstricting peptide, which acts as a key regulator of blood pressure and sodium retention by the kidney. The activated receptor in turn couples to G-alpha proteins G(q) (GNAQ, GNA11, GNA14 or GNA15) and thus activates phospholipase C and increases the cytosolic Ca(2+) concentrations, which in turn triggers cellular responses such as stimulation of protein kinase C. The protein is Type-1 angiotensin II receptor (AGTR1) of Bos taurus (Bovine).